A 495-amino-acid polypeptide reads, in one-letter code: L-arabinose isomerase (495 aa).

Residues E305, E332, H349, and H448 each coordinate Mn(2+).

This sequence belongs to the arabinose isomerase family. The cofactor is Mn(2+).

It catalyses the reaction beta-L-arabinopyranose = L-ribulose. Its pathway is carbohydrate degradation; L-arabinose degradation via L-ribulose; D-xylulose 5-phosphate from L-arabinose (bacterial route): step 1/3. Functionally, catalyzes the conversion of L-arabinose to L-ribulose. This Actinobacillus succinogenes (strain ATCC 55618 / DSM 22257 / CCUG 43843 / 130Z) protein is L-arabinose isomerase.